The following is a 406-amino-acid chain: GTPase Obg (406 aa).

Residues 1–159 (MKFVDEVSIH…RDLKLELKVL (159 aa)) form the Obg domain. Positions 127–148 (NTRFKSSTNRAPRQTTPGKPGE) are disordered. The segment covering 129-143 (RFKSSTNRAPRQTTP) has biased composition (polar residues). One can recognise an OBG-type G domain in the interval 160–334 (ADVGLLGLPN…LSQDIMRYLD (175 aa)). GTP-binding positions include 166–173 (GLPNAGKS), 191–195 (FTTLV), 213–216 (DIPG), 283–286 (NKMD), and 315–317 (SAL). Residues S173 and T193 each contribute to the Mg(2+) site. Residues 378 to 406 (GLKNAGAADDDDFDDEEDDGDGPEIFYVP) are disordered. The segment covering 385–399 (ADDDDFDDEEDDGDG) has biased composition (acidic residues).

Belongs to the TRAFAC class OBG-HflX-like GTPase superfamily. OBG GTPase family. Monomer. Mg(2+) is required as a cofactor.

The protein localises to the cytoplasm. In terms of biological role, an essential GTPase which binds GTP, GDP and possibly (p)ppGpp with moderate affinity, with high nucleotide exchange rates and a fairly low GTP hydrolysis rate. Plays a role in control of the cell cycle, stress response, ribosome biogenesis and in those bacteria that undergo differentiation, in morphogenesis control. The polypeptide is GTPase Obg (Pseudomonas paraeruginosa (strain DSM 24068 / PA7) (Pseudomonas aeruginosa (strain PA7))).